Reading from the N-terminus, the 289-residue chain is Rhodopsin (289 aa).

Over 1–7 the chain is Extracellular; it reads YLVNPAG. Residues 8–32 form a helical membrane-spanning segment; the sequence is YAALGAYMFLLILIGFPVNFLTLYV. The Cytoplasmic portion of the chain corresponds to 33 to 44; it reads TLEHKKLRTPLN. A helical membrane pass occupies residues 45–67; the sequence is YILLNLAVADLFMVLGGFTTTMY. Residues 68-81 are Extracellular-facing; that stretch reads TSMHGYFVLGRLGC. Cysteines 81 and 158 form a disulfide. The chain crosses the membrane as a helical span at residues 82–104; that stretch reads NLEGFFATLGGEIALWSLVVLAI. The short motif at 105-107 is the 'Ionic lock' involved in activated form stabilization element; that stretch reads ERW. Residues 105–123 lie on the Cytoplasmic side of the membrane; it reads ERWIVGLKPIRNFRFTEDH. The chain crosses the membrane as a helical span at residues 124-144; the sequence is AIMGLAFSWVMALSCAVPPLA. Residues 145 to 173 are Extracellular-facing; sequence GWLRYIPEGIQGSCGVDYYTRAEGFNNES. The N-linked (GlcNAc...) asparagine glycan is linked to Asn171. Residues 174 to 195 form a helical membrane-spanning segment; the sequence is FVIYMFTVHFLIPLSVIFFCYG. Topologically, residues 196-223 are cytoplasmic; the sequence is RLLCAVKEAAAAQQESETTQRAEKEVSR. A helical membrane pass occupies residues 224–245; it reads MVVIMVIGFLVCWLPYASVAWW. The Extracellular segment spans residues 246 to 257; it reads IFCNQGSDFGPI. The helical transmembrane segment at 258 to 279 threads the bilayer; that stretch reads FMTLPSFFAKRPAIYNPMIYIC. Lys267 carries the N6-(retinylidene)lysine modification. Residues 280–289 are Cytoplasmic-facing; it reads MNKQFRHCMI.

The protein belongs to the G-protein coupled receptor 1 family. Opsin subfamily. Phosphorylated on some or all of the serine and threonine residues present in the C-terminal region. In terms of processing, contains one covalently linked retinal chromophore.

Its subcellular location is the membrane. It is found in the cell projection. The protein localises to the cilium. It localises to the photoreceptor outer segment. Its function is as follows. Photoreceptor required for image-forming vision at low light intensity. While most salt water fish species use retinal as chromophore, most freshwater fish use 3-dehydroretinal, or a mixture of retinal and 3-dehydroretinal. Light-induced isomerization of 11-cis to all-trans retinal triggers a conformational change that activates signaling via G-proteins. Subsequent receptor phosphorylation mediates displacement of the bound G-protein alpha subunit by arrestin and terminates signaling. The polypeptide is Rhodopsin (rho) (Limnocottus pallidus (Ray-finned fish)).